We begin with the raw amino-acid sequence, 443 residues long: D(2) dopamine receptor (443 aa).

The Extracellular segment spans residues 1 to 37 (MDPLNLSWYDDDLERQNWSRPFNGSDGKADRPHYNYY). 3 N-linked (GlcNAc...) asparagine glycosylation sites follow: Asn5, Asn17, and Asn23. Residues 38–60 (ATLLTLLIAVIVFGNVLVCMAVS) traverse the membrane as a helical segment. Topologically, residues 61–70 (REKALQTTTN) are cytoplasmic. The helical transmembrane segment at 71–93 (YLIVSLAVADLLVATLVMPWVVY) threads the bilayer. Residues 94 to 108 (LEVVGEWKFSRIHCD) lie on the Extracellular side of the membrane. Cys107 and Cys182 are oxidised to a cystine. A helical membrane pass occupies residues 109-130 (IFVTLDVMMCTASILNLCAISI). The Cytoplasmic segment spans residues 131–151 (DRYTAVAMPMLYNTRYSSKRR). The chain crosses the membrane as a helical span at residues 152–172 (VTVMISIVWVLSFTISCPLLF). The Extracellular portion of the chain corresponds to 173-188 (GLNNADQNECIIANPA). The helical transmembrane segment at 189–213 (FVVYSSIVSFYVPFIVTLLVYIKIY) threads the bilayer. Residues 211–373 (KIYIVLRRRR…SQQKEKKATQ (163 aa)) are interaction with PPP1R9B. At 214–373 (IVLRRRRKRV…SQQKEKKATQ (160 aa)) the chain is on the cytoplasmic side. The segment at 281-332 (MEMLSSTSPPERTRYSPIPPSHHQLTLPDPSHHGLHSTPDSPAKPEKNGHAK) is disordered. The segment covering 323-332 (AKPEKNGHAK) has biased composition (basic and acidic residues). Residues 374–395 (MLAIVLGVFIICWLPFFITHIL) traverse the membrane as a helical segment. Topologically, residues 396–409 (NIHCDCNIPPVLYS) are extracellular. Residues Cys399 and Cys401 are joined by a disulfide bond. A helical membrane pass occupies residues 410–431 (AFTWLGYVNSAVNPIIYTTFNI). The Cytoplasmic segment spans residues 432–443 (EFRKAFLKILHC). Cys443 carries the S-palmitoyl cysteine lipid modification.

Belongs to the G-protein coupled receptor 1 family. In terms of assembly, forms homo- and heterooligomers with DRD4. The interaction with DRD4 may modulate agonist-induced downstream signaling. Interacts with CADPS and CADPS2. Interacts with GPRASP1, PPP1R9B and CLIC6. Interacts with ARRB2. Interacts with HTR2A. Interacts with GNAI2 isoform sGi2, the interaction allows the creation of an intracellular pool of DRD2 that can be released to cell surface upon agonist stimulation. Interacts with DRD1. Interacts with KCNA2. Palmitoylated. Palmitoylation which is required for proper localization to the plasma membrane and stability of the receptor could be carried on by ZDHHC4, ZDHHC3 and ZDHHC8. As to expression, expressed in the anterior pituitary gland.

The protein localises to the cell membrane. It is found in the golgi apparatus membrane. Dopamine receptor whose activity is mediated by G proteins which inhibit adenylyl cyclase. Positively regulates postnatal regression of retinal hyaloid vessels via suppression of VEGFR2/KDR activity, downstream of OPN5. The chain is D(2) dopamine receptor (DRD2) from Homo sapiens (Human).